The following is a 247-amino-acid chain: 3-deoxy-manno-octulosonate cytidylyltransferase (247 aa).

It belongs to the KdsB family.

It localises to the cytoplasm. It carries out the reaction 3-deoxy-alpha-D-manno-oct-2-ulosonate + CTP = CMP-3-deoxy-beta-D-manno-octulosonate + diphosphate. It functions in the pathway nucleotide-sugar biosynthesis; CMP-3-deoxy-D-manno-octulosonate biosynthesis; CMP-3-deoxy-D-manno-octulosonate from 3-deoxy-D-manno-octulosonate and CTP: step 1/1. The protein operates within bacterial outer membrane biogenesis; lipopolysaccharide biosynthesis. Its function is as follows. Activates KDO (a required 8-carbon sugar) for incorporation into bacterial lipopolysaccharide in Gram-negative bacteria. The protein is 3-deoxy-manno-octulosonate cytidylyltransferase of Methylobacterium radiotolerans (strain ATCC 27329 / DSM 1819 / JCM 2831 / NBRC 15690 / NCIMB 10815 / 0-1).